We begin with the raw amino-acid sequence, 191 residues long: Adenine phosphoribosyltransferase (191 aa).

Belongs to the purine/pyrimidine phosphoribosyltransferase family. Homodimer.

The protein resides in the cytoplasm. The enzyme catalyses AMP + diphosphate = 5-phospho-alpha-D-ribose 1-diphosphate + adenine. It functions in the pathway purine metabolism; AMP biosynthesis via salvage pathway; AMP from adenine: step 1/1. In terms of biological role, catalyzes a salvage reaction resulting in the formation of AMP, that is energically less costly than de novo synthesis. This Clavibacter sepedonicus (Clavibacter michiganensis subsp. sepedonicus) protein is Adenine phosphoribosyltransferase.